A 180-amino-acid chain; its full sequence is ATP synthase subunit b, plastid (180 aa).

A helical membrane pass occupies residues 27–49; sequence LVTTLINIAVVLSLLIVFGKGFL.

Belongs to the ATPase B chain family. As to quaternary structure, F-type ATPases have 2 components, F(1) - the catalytic core - and F(0) - the membrane proton channel. F(1) has five subunits: alpha(3), beta(3), gamma(1), delta(1), epsilon(1). F(0) has four main subunits: a(1), b(1), b'(1) and c(10-14). The alpha and beta chains form an alternating ring which encloses part of the gamma chain. F(1) is attached to F(0) by a central stalk formed by the gamma and epsilon chains, while a peripheral stalk is formed by the delta, b and b' chains.

The protein resides in the plastid membrane. In terms of biological role, f(1)F(0) ATP synthase produces ATP from ADP in the presence of a proton or sodium gradient. F-type ATPases consist of two structural domains, F(1) containing the extramembraneous catalytic core and F(0) containing the membrane proton channel, linked together by a central stalk and a peripheral stalk. During catalysis, ATP synthesis in the catalytic domain of F(1) is coupled via a rotary mechanism of the central stalk subunits to proton translocation. Component of the F(0) channel, it forms part of the peripheral stalk, linking F(1) to F(0). The protein is ATP synthase subunit b, plastid of Cuscuta gronovii (Common dodder).